Consider the following 278-residue polypeptide: SLAM family member 8 (278 aa).

An N-terminal signal peptide occupies residues 1-20 (MWSLWSLLLFEALLPVVVVS). Topologically, residues 21 to 231 (VQVLSKVGDS…AASGKASYKD (211 aa)) are extracellular. 2 N-linked (GlcNAc...) asparagine glycosylation sites follow: asparagine 83 and asparagine 154. Residues 126–213 (PEVQVFTAAA…PVSWDMTTVT (88 aa)) form the Ig-like C2-type domain. Residues cysteine 150 and cysteine 199 are joined by a disulfide bond. The helical transmembrane segment at 232-252 (VLLVVVPITLFLILAGLFGAW) threads the bilayer. Over 253–278 (HHGLCSGKKKDACTDGVLPETENALV) the chain is Cytoplasmic.

The protein localises to the membrane. May play a role in B-lineage commitment and/or modulation of signaling through the B-cell receptor. In Mus musculus (Mouse), this protein is SLAM family member 8 (Slamf8).